A 102-amino-acid chain; its full sequence is Large ribosomal subunit protein bL21 (102 aa).

The protein belongs to the bacterial ribosomal protein bL21 family. As to quaternary structure, part of the 50S ribosomal subunit. Contacts protein L20.

This protein binds to 23S rRNA in the presence of protein L20. This chain is Large ribosomal subunit protein bL21, found in Zymomonas mobilis subsp. mobilis (strain ATCC 31821 / ZM4 / CP4).